The primary structure comprises 377 residues: Nitric oxide reductase FlRd-NAD(+) reductase (377 aa).

It belongs to the FAD-dependent oxidoreductase family. FAD is required as a cofactor.

It localises to the cytoplasm. It catalyses the reaction 2 reduced [nitric oxide reductase rubredoxin domain] + NAD(+) + H(+) = 2 oxidized [nitric oxide reductase rubredoxin domain] + NADH. It functions in the pathway nitrogen metabolism; nitric oxide reduction. Functionally, one of at least two accessory proteins for anaerobic nitric oxide (NO) reductase. Reduces the rubredoxin moiety of NO reductase. This Salmonella dublin (strain CT_02021853) protein is Nitric oxide reductase FlRd-NAD(+) reductase.